A 1345-amino-acid chain; its full sequence is CRISPR-associated endonuclease Cas9 (1345 aa).

The For RuvC-like nuclease domain role is filled by D10. The Mg(2+) site is built by D10, E762, and E766. The 152-residue stretch at 770 to 921 folds into the HNH Cas9-type domain; it reads TNQGRRNSQQ…DKAGFIKRQL (152 aa). H840 serves as the catalytic Proton acceptor for HNH nuclease domain. H983 lines the Mg(2+) pocket.

This sequence belongs to the CRISPR-associated protein Cas9 family. Subtype II-A subfamily. In terms of assembly, monomer. Binds crRNA and tracrRNA. The cofactor is Mg(2+).

Its function is as follows. CRISPR (clustered regularly interspaced short palindromic repeat) is an adaptive immune system that provides protection against mobile genetic elements (viruses, transposable elements and conjugative plasmids). CRISPR clusters contain spacers, sequences complementary to antecedent mobile elements, and target invading nucleic acids. CRISPR clusters are transcribed and processed into CRISPR RNA (crRNA). In type II CRISPR systems correct processing of pre-crRNA requires a trans-encoded small RNA (tracrRNA), endogenous ribonuclease 3 (rnc) and this protein. The tracrRNA serves as a guide for ribonuclease 3-aided processing of pre-crRNA. Subsequently Cas9/crRNA/tracrRNA endonucleolytically cleaves linear or circular dsDNA target complementary to the spacer; Cas9 is inactive in the absence of the 2 guide RNAs (gRNA). Cas9 recognizes the protospacer adjacent motif (PAM) in the CRISPR repeat sequences to help distinguish self versus nonself, as targets within the bacterial CRISPR locus do not have PAMs. PAM recognition is also required for catalytic activity. Complements the gRNA coprocessing defect in a cas9 deletion in S.pyogenes strain 370 and cuts target plasmid in Cas9:gRNAs mixing experiments with S.thermophilus CRISPR3 from strain LMD-9. This is CRISPR-associated endonuclease Cas9 from Streptococcus mutans serotype c (strain ATCC 700610 / UA159).